The sequence spans 82 residues: Metallothionein (82 aa).

Cysteine 6, cysteine 8, cysteine 11, cysteine 13, cysteine 29, cysteine 33, histidine 37, cysteine 43, cysteine 48, and cysteine 50 together coordinate Cd(2+). Positions 6, 8, and 11 each coordinate Zn(2+). Residues cysteine 29, cysteine 33, histidine 37, cysteine 43, cysteine 48, and cysteine 50 each contribute to the Zn(2+) site. Residues 61 to 82 (ITNNQLDEALEETFPASDPISP) form a disordered region.

The protein belongs to the metallothionein superfamily.

Its function is as follows. Metallothioneins are small proteins that have a high content of cysteine residues which allow them to bind heavy metal ions through clusters of thiolate bonds. Preferentially, binds four Cd(2+) ions. Also binds three Zn(2+) ions but with less affinity. Required for long-term viability. May play a role in the storage or sequestration of metals when present in excess. The sequence is that of Metallothionein from Pseudomonas fluorescens (strain Q2-87).